Consider the following 505-residue polypeptide: Glutamyl-tRNA(Gln) amidotransferase subunit A (505 aa).

Active-site charge relay system residues include Lys-80 and Ser-155. The active-site Acyl-ester intermediate is Ser-179.

Belongs to the amidase family. GatA subfamily. Heterotrimer of A, B and C subunits.

The enzyme catalyses L-glutamyl-tRNA(Gln) + L-glutamine + ATP + H2O = L-glutaminyl-tRNA(Gln) + L-glutamate + ADP + phosphate + H(+). Allows the formation of correctly charged Gln-tRNA(Gln) through the transamidation of misacylated Glu-tRNA(Gln) in organisms which lack glutaminyl-tRNA synthetase. The reaction takes place in the presence of glutamine and ATP through an activated gamma-phospho-Glu-tRNA(Gln). This Acidothermus cellulolyticus (strain ATCC 43068 / DSM 8971 / 11B) protein is Glutamyl-tRNA(Gln) amidotransferase subunit A.